The sequence spans 311 residues: Nucleotide-binding protein Acel_1111 (311 aa).

30 to 37 (GLSGAGRS) is an ATP binding site. 81–84 (DVRS) lines the GTP pocket.

It belongs to the RapZ-like family.

Functionally, displays ATPase and GTPase activities. This chain is Nucleotide-binding protein Acel_1111, found in Acidothermus cellulolyticus (strain ATCC 43068 / DSM 8971 / 11B).